Consider the following 432-residue polypeptide: MRVVILGSGVVGVTSAWYLSQAGHDVTVIDRESGPAQETSAANAGQISPGYAAPWAAPGVPLKAIKWMFQRHAPLAVRLDGTPFQLKWMWQMLRNCDTRHYMENKGRMVRLAEYSRDCLKTLRAATGIEYEGRQGGTLQLFRTAQQYENATRDIAVLEDAGVPYQLLEASRLAEVEPALAEVAHKLTGGLRLPNDETGDCQLFTQRLARMAEQAGVTFRFNTPVEKLLYENDQIYGVKCADEIIKADAYVMAFGSYSTAMLKGIVDIPVYPLKGYSLTIPIVEPDGAPVSTILDETYKIAITRFDKRIRVGGMAEIVGFNTDLLQPRRETLEMVVRDLFPRGGHIEQATFWTGLRPMTPDGTPVVGRTRYKNLWLNTGHGTLGWTMACGSGQLLSDILLGRTPAIPYDDLSVARYRSDFTPTRPQRLHSAHN.

3–17 contacts FAD; sequence VVILGSGVVGVTSAW.

The protein belongs to the DadA oxidoreductase family. FAD serves as cofactor.

Its subcellular location is the cell inner membrane. It catalyses the reaction a D-alpha-amino acid + A + H2O = a 2-oxocarboxylate + AH2 + NH4(+). It participates in amino-acid degradation; D-alanine degradation; NH(3) and pyruvate from D-alanine: step 1/1. Its function is as follows. Oxidative deamination of D-amino acids. In Salmonella typhi, this protein is D-amino acid dehydrogenase.